The primary structure comprises 407 residues: Betaine--homocysteine S-methyltransferase 1 (407 aa).

Residues 11 to 314 (KGILERLNSG…YHIRAIAEEL (304 aa)) enclose the Hcy-binding domain. Lys-40, Lys-93, and Lys-98 each carry N6-succinyllysine. Zn(2+) is bound at residue Cys-217. Residues Lys-232 and Lys-241 each carry the N6-succinyllysine modification. Zn(2+)-binding residues include Cys-299 and Cys-300. A Phosphoserine modification is found at Ser-330. Lys-340 and Lys-377 each carry N6-succinyllysine.

As to quaternary structure, homotetramer. Zn(2+) is required as a cofactor.

It localises to the cytoplasm. Its subcellular location is the cytosol. The protein localises to the nucleus. The enzyme catalyses L-homocysteine + glycine betaine = N,N-dimethylglycine + L-methionine. Its pathway is amine and polyamine degradation; betaine degradation; sarcosine from betaine: step 1/2. It functions in the pathway amino-acid biosynthesis; L-methionine biosynthesis via de novo pathway; L-methionine from L-homocysteine (BhmT route): step 1/1. In terms of biological role, involved in the regulation of homocysteine metabolism. Converts betaine and homocysteine to dimethylglycine and methionine, respectively. This reaction is also required for the irreversible oxidation of choline. This is Betaine--homocysteine S-methyltransferase 1 (BHMT) from Bos taurus (Bovine).